An 831-amino-acid polypeptide reads, in one-letter code: Prickle-like protein 1 (831 aa).

In terms of domain architecture, PET spans 14-122 (FGCQRSSTSD…TIKLLSRAVM (109 aa)). LIM zinc-binding domains lie at 124–189 (AVCE…LLKP), 189–249 (PRCS…LYAE), and 249–313 (EYCE…EDVH). A disordered region spans residues 313–342 (HASDSSDSAFQSARSRDSRRSVRMGKSSRS). 3 positions are modified to phosphoserine: Ser315, Ser591, and Ser594. Disordered regions lie at residues 663–688 (FEER…NALN) and 763–831 (CSSS…CIIS). Over residues 669-680 (RSHHHRRRRSRK) the composition is skewed to basic residues. A Phosphoserine modification is found at Ser683. Residues 815-831 (TKSKKKKGHKGKNCIIS) are compositionally biased toward basic residues. Cys828 carries the post-translational modification Cysteine methyl ester. Residue Cys828 is the site of S-farnesyl cysteine attachment. A propeptide spans 829-831 (IIS) (removed in mature form).

This sequence belongs to the prickle / espinas / testin family. As to quaternary structure, interacts with REST. Expressed at highest levels in placenta and at lower levels in lung, liver, kidney and pancreas. Expressed in thalamus, hippocampus, cerebral cortex, and cerebellum (in neurons rather than glia).

It localises to the nucleus membrane. It is found in the cytoplasm. The protein resides in the cytosol. Functionally, involved in the planar cell polarity pathway that controls convergent extension during gastrulation and neural tube closure. Convergent extension is a complex morphogenetic process during which cells elongate, move mediolaterally, and intercalate between neighboring cells, leading to convergence toward the mediolateral axis and extension along the anteroposterior axis. Necessary for nuclear localization of REST. May serve as nuclear receptor. The polypeptide is Prickle-like protein 1 (PRICKLE1) (Homo sapiens (Human)).